Here is a 217-residue protein sequence, read N- to C-terminus: Tegument protein BKRF4 (217 aa).

Positions 1–217 (MAMFLKSRGV…GNNNYNWPWL (217 aa)) are disordered. Residues 32 to 42 (YTLGSQASQSI) show a composition bias toward polar residues. Positions 43–79 (QEEDVSDTDESDYSDEDEEIDLEEEYPSDEDPSEGSD) are enriched in acidic residues. An interaction with host histones H3/H4 region spans residues 63–64 (DL). The tract at residues 81–84 (DPSW) is interaction with host H2A/H2B. Residues 89–102 (SDESDYSESDEDEA) are compositionally biased toward acidic residues. Positions 106 to 132 (SQASRSSRVSPSTQQSSGLTPTPSFSR) are enriched in low complexity. Residues 136–145 (RAPPRPPAPA) show a composition bias toward pro residues. Polar residues predominate over residues 208 to 217 (GNNNYNWPWL).

The protein belongs to the lymphocryptovirus BKRF4 family. As to quaternary structure, forms a complex with the host H3/H4 dimer and histone chaperone ASF1. Also forms a complex with host H2A/H2B dimer. Interacts (via C-terminus) with BGLF2; this interaction is important for infectious virion production.

The protein localises to the virion tegument. It localises to the host nucleus. Its subcellular location is the host cytoplasm. The protein resides in the host perinuclear region. Histone-binding protein that binds to histones H2A/H2B, H3/H4 and cellular chromatin to overcome the host DNA damage response triggered by the viral genome ends. Interferes with histone ubiquitination and recruitment of repair proteins. The polypeptide is Tegument protein BKRF4 (Epstein-Barr virus (strain AG876) (HHV-4)).